Reading from the N-terminus, the 201-residue chain is Small ribosomal subunit protein uS4c (201 aa).

One can recognise an S4 RNA-binding domain in the interval 89-152 (MRLDNILFRL…NSRTLVQNLI (64 aa)).

The protein belongs to the universal ribosomal protein uS4 family. As to quaternary structure, part of the 30S ribosomal subunit. Contacts protein S5. The interaction surface between S4 and S5 is involved in control of translational fidelity.

Its subcellular location is the plastid. The protein resides in the chloroplast. Its function is as follows. One of the primary rRNA binding proteins, it binds directly to 16S rRNA where it nucleates assembly of the body of the 30S subunit. Functionally, with S5 and S12 plays an important role in translational accuracy. The polypeptide is Small ribosomal subunit protein uS4c (rps4) (Crucihimalaya wallichii (Rock-cress)).